Reading from the N-terminus, the 147-residue chain is 3-dehydroquinate dehydratase (147 aa).

Tyrosine 23 acts as the Proton acceptor in catalysis. Positions 74, 80, and 87 each coordinate substrate. The Proton donor role is filled by histidine 100. Substrate contacts are provided by residues 101-102 (LS) and arginine 111.

Belongs to the type-II 3-dehydroquinase family. Homododecamer.

The catalysed reaction is 3-dehydroquinate = 3-dehydroshikimate + H2O. It participates in metabolic intermediate biosynthesis; chorismate biosynthesis; chorismate from D-erythrose 4-phosphate and phosphoenolpyruvate: step 3/7. Catalyzes a trans-dehydration via an enolate intermediate. This chain is 3-dehydroquinate dehydratase, found in Clostridium botulinum (strain ATCC 19397 / Type A).